The following is a 321-amino-acid chain: Secreted RxLR effector protein 71 (321 aa).

An N-terminal signal peptide occupies residues 1 to 23; it reads MRPTGWRWPVLSLLLVLLPFQAA. The short motif at 84–87 is the RxLR element; it reads RSLR. Asn-114 carries an N-linked (GlcNAc...) asparagine glycan. A disordered region spans residues 210 to 237; the sequence is VSLGRDGNGPVRGISSSPTRLTRPRMGG.

Belongs to the RxLR effector family.

The protein localises to the secreted. The protein resides in the host cell. Secreted effector that partially suppresses the host cell death induced by cell death-inducing proteins. The sequence is that of Secreted RxLR effector protein 71 from Plasmopara viticola (Downy mildew of grapevine).